A 252-amino-acid polypeptide reads, in one-letter code: Chitooligosaccharide deacetylase (252 aa).

Residues His61 and His125 each coordinate Mg(2+).

The protein belongs to the YdjC deacetylase family. ChbG subfamily. Homodimer. It depends on Mg(2+) as a cofactor.

It is found in the cytoplasm. It catalyses the reaction N,N'-diacetylchitobiose + H2O = N-acetyl-beta-D-glucosaminyl-(1-&gt;4)-D-glucosamine + acetate. It carries out the reaction diacetylchitobiose-6'-phosphate + H2O = N'-monoacetylchitobiose-6'-phosphate + acetate. It participates in glycan degradation; chitin degradation. Its function is as follows. Involved in the degradation of chitin. ChbG is essential for growth on the acetylated chitooligosaccharides chitobiose and chitotriose but is dispensable for growth on cellobiose and chitosan dimer, the deacetylated form of chitobiose. Deacetylation of chitobiose-6-P and chitotriose-6-P is necessary for both the activation of the chb promoter by the regulatory protein ChbR and the hydrolysis of phosphorylated beta-glucosides by the phospho-beta-glucosidase ChbF. Catalyzes the removal of only one acetyl group from chitobiose-6-P to yield monoacetylchitobiose-6-P, the inducer of ChbR and the substrate of ChbF. The protein is Chitooligosaccharide deacetylase of Escherichia coli O45:K1 (strain S88 / ExPEC).